A 1187-amino-acid polypeptide reads, in one-letter code: MEDDDDDQRLLHSLGVTSADIHDIERRIISQATTDPADSSGPTINGGHQPDDALAKLHHKLRSVQIEIDAVASTIKGAKLKQPSGNKPHEHKGKDQPDHHGAGHLQQALAADRLTSLRKAKAQIQKEILQSHPSPSASNRKDKMLAMLVQDEPRHKKPPVGPKNIVKRPMKTVTYDDDNNFDAVLDGASAGFMETEREELIRKGLLTPFHKLKGFEKRVELPEPSHRQDDSAGQTEEAMEASRIARVAQSLKQIAQNRPATKLLDSESLPKLDAPAAPFQRLGKPLKRPVSPSSDEQEKKRPRNKTKRPLPGKKWRKANSIKESSLDDNDVGEAAVSVSDDDEDQVTEGSDELTDVTLEGGLRIPGTLYTQLFDYQKVGVQWLWELHCQRAGGIIGDEMGLGKTVQVLSFLGSLHNSGLYKPSIVVCPVTLLQQWRREASRWYPKFKVEILHDSANSSSKKSKRSSDSDSEASWDSDQEEAVTCSKPAKKWDDLISRVVSSGSGLLLTTYEQLRILGEKLLDIEWGYAVLDEGHRIRNPNAEITLVCKQLQTVHRIIMTGAPIQNKLSELWSLFDFVFPGKLGVLPVFEAEFSVPITVGGYANATPLQVSTAYRCAVVLRDLVMPYLLRRMKADVNAQLPKKTEHVLFCSLTTEQRATYRAFLASSEVEQIFDGNRNSLYGIDVLRKICNHPDLLEREHAAQNPDYGNPERSGKMKVVEQVLKVWKEQGHRVLLFTQTQQMLDIMENFLTACEYQYRRMDGLTPAKQRMALIDEFNNTDEIFIFILTTKVGGLGTNLTGANRIIIYDPDWNPSTDMQARERAWRIGQTRDVTVYRLITRGTIEEKVYHRQIYKHFLTNKVLKDPQQRRFFKARDMKDLFTLQDDDNNGSTETSNIFSQLSEDVNIGVPSDKQQDQLYAASATPTTSGTEPSSSRHGQGKEDHCPDQADEECNILKSLFDAQGIHSAINHDAIMNANDDQKLRLEAEATQVAQRAAEALRQSRMLRSHESFSVPTWTGRAGAAGAPSSVRRKFGSTLNTQLVNSSQPSETSNGRGQSLQVGALNGKALSSAELLARIRGTREGAASDALEHQLNLGSASNHTSSSSGNGRASSSSTRSMIVQPEVLIRQLCTFIQQHGGSASSTSITEHFKNRILSKDMLLFKNLLKEIATLQRGANGATWVLKPDYQ.

Residues 31 to 43 show a composition bias toward polar residues; sequence QATTDPADSSGPT. 4 disordered regions span residues 31–53, 75–102, 217–242, and 265–351; these read QATT…PDDA, IKGA…HHGA, KRVE…MEAS, and DSES…EGSD. Basic and acidic residues-rich tracts occupy residues 92 to 101 and 217 to 230; these read KGKDQPDHHG and KRVE…RQDD. The span at 300 to 319 shows a compositional bias: basic residues; the sequence is KRPRNKTKRPLPGKKWRKAN. The segment covering 339–351 has biased composition (acidic residues); the sequence is SDDDEDQVTEGSD. Residues 384–580 form the Helicase ATP-binding domain; it reads WELHCQRAGG…WSLFDFVFPG (197 aa). An ATP-binding site is contributed by 397 to 404; it reads DEMGLGKT. Residues 457–480 form a disordered region; sequence SSSKKSKRSSDSDSEASWDSDQEE. Over residues 468–480 the composition is skewed to acidic residues; it reads SDSEASWDSDQEE. Positions 531–534 match the DEGH box motif; that stretch reads DEGH. A Helicase C-terminal domain is found at 716–876; it reads KVVEQVLKVW…RRFFKARDMK (161 aa). Disordered regions lie at residues 916–945 and 1095–1116; these read LYAA…HCPD and GSAS…SSTR. The segment covering 918 to 933 has biased composition (low complexity); that stretch reads AASATPTTSGTEPSSS.

Belongs to the SNF2/RAD54 helicase family. In terms of assembly, homodimer. Binds DNA. As to expression, expressed in proliferating tissues. Highly expressed in shoot apical meristem (SAM). Expressed in roots, young leaves, flag leaves, and panicles. Expressed at very low levels in mature leaves.

It localises to the nucleus. Its function is as follows. Essential factor involved in transcription-coupled nucleotide excision repair (TCR) which allows RNA polymerase II-blocking lesions to be rapidly removed from the transcribed strand of active genes. Upon DNA-binding, it locally modifies DNA conformation by wrapping the DNA around itself, thereby modifying the interface between stalled RNA polymerase II and DNA. It is required for transcription-coupled repair complex formation. The sequence is that of DNA excision repair protein CSB from Oryza sativa subsp. japonica (Rice).